A 129-amino-acid chain; its full sequence is Venom CUB domain-containing protein 1 (129 aa).

The first 18 residues, 1-18 (MKLLGVLITIYCIASTLA), serve as a signal peptide directing secretion. Residues 19–121 (IDVNVPSNGM…KASCKAYSIT (103 aa)) enclose the CUB domain. Cys66 and Cys83 are disulfide-bonded.

Belongs to the venom CUB family. Post-translationally, contains 2 disulfide bonds. Expressed by the venom gland.

It is found in the secreted. This Platymeris rhadamanthus (Red spot assassin bug) protein is Venom CUB domain-containing protein 1.